The following is a 647-amino-acid chain: UvrABC system protein C (647 aa).

A GIY-YIG domain is found at 16 to 95; sequence VEPGVYRFRD…IKEFDPRFNI (80 aa). Residues 208–243 enclose the UVR domain; the sequence is DRYARDLERKMSAAAEQLDFERAARLRDDLFALKRA.

It belongs to the UvrC family. In terms of assembly, interacts with UvrB in an incision complex.

It is found in the cytoplasm. In terms of biological role, the UvrABC repair system catalyzes the recognition and processing of DNA lesions. UvrC both incises the 5' and 3' sides of the lesion. The N-terminal half is responsible for the 3' incision and the C-terminal half is responsible for the 5' incision. The sequence is that of UvrABC system protein C from Mycobacterium leprae (strain Br4923).